The chain runs to 269 residues: GATA transcription factor 3 (269 aa).

The Nuclear localization signal signature appears at 136 to 143 (KPRTKRSR). The segment at 176-230 (LVFQRRCSHCGTNNTPQWRTGPVGPKTLCNACGVRFKSGRLCPEYRPADSPTFSN) adopts a GATA-type zinc-finger fold. Positions 245 to 269 (KSKELGEETGEASTKSDPVKFGSKW) are disordered.

It belongs to the type IV zinc-finger family. Class A subfamily. Mostly expressed in roots. Also expressed in stems, flowers and leaves.

It is found in the nucleus. Its function is as follows. Transcriptional activator that specifically binds 5'-GATA-3' or 5'-GAT-3' motifs within gene promoters. May be involved in the regulation of some light-responsive genes. This chain is GATA transcription factor 3 (GATA3), found in Arabidopsis thaliana (Mouse-ear cress).